Here is a 55-residue protein sequence, read N- to C-terminus: Protein SOX-19 (55 aa).

Residues 1–55 (MVWSQIERRKIMEQWPDMHNAEISKRLGKRWKLLPDYEKIPFIKEAERLRLKHMA) constitute a DNA-binding region (HMG box).

The protein resides in the nucleus. This is Protein SOX-19 (Sox19) from Mus musculus (Mouse).